We begin with the raw amino-acid sequence, 433 residues long: Signal recognition particle 54 kDa protein (433 aa).

GTP is bound by residues 106–113 (GVEGSGKT), 186–190 (DTAGR), and 244–247 (TKMD).

Belongs to the GTP-binding SRP family. SRP54 subfamily. As to quaternary structure, part of the signal recognition particle protein translocation system, which is composed of SRP and FtsY. Archaeal SRP consists of a 7S RNA molecule of 300 nucleotides and two protein subunits: SRP54 and SRP19.

The protein resides in the cytoplasm. It carries out the reaction GTP + H2O = GDP + phosphate + H(+). Functionally, involved in targeting and insertion of nascent membrane proteins into the cytoplasmic membrane. Binds to the hydrophobic signal sequence of the ribosome-nascent chain (RNC) as it emerges from the ribosomes. The SRP-RNC complex is then targeted to the cytoplasmic membrane where it interacts with the SRP receptor FtsY. The chain is Signal recognition particle 54 kDa protein from Pyrobaculum islandicum (strain DSM 4184 / JCM 9189 / GEO3).